An 82-amino-acid chain; its full sequence is Small ribosomal subunit protein bS16 (82 aa).

The protein belongs to the bacterial ribosomal protein bS16 family.

This is Small ribosomal subunit protein bS16 from Synechococcus elongatus (strain ATCC 33912 / PCC 7942 / FACHB-805) (Anacystis nidulans R2).